The sequence spans 248 residues: 14-3-3 protein (248 aa).

Coiled coils occupy residues 13 to 33 and 91 to 111; these read MAQL…MRKI and RQKI…LLQE. 135 to 136 provides a ligand contact to O-phospho-L-serine; that stretch reads RY. Threonine 214 carries the post-translational modification Phosphothreonine. The Putative polyglycylation target motif (T/G)X0-1(D/E)X1-3-G(D/E)X1-2(gE)2-4, where X is polar or negatively charged amino acid, and gE is polyglycylated glutamine motif lies at 237–248; that stretch reads TDSAGDDNAEEK. 5-glutamyl polyglycine is present on glutamate 246.

The protein belongs to the 14-3-3 family. Homodimer. Homodimerizes via N-terminal domains. Oligomerizes forming homotrimers, homotetramers and protein filaments. Oligomerization is hindered by polyglycylation in vivo. Interacts with a large number of both cytosolic and membrane proteins in trophozoites and encysting parasites. Interacts with a serine/threonine protein kinase GL50803_112076 (gCDC7). Component of a multiprotein complex containing gCDC7 and GL50803_94117 (gDBF4), a regulatory subunit of gCDC7, during both the trophozoite and encysting stages of the parasite. Interacts with fructose-bisphosphate aldolase GL50803_11043 (gFBA), pyruvate kinase GL50803_17143 (gPyk), acetyl-CoA synthetase GL50803_13608 (gACS), protein kinase GL50803_22165 (gSTE), DEAD box RNA helicase GL50803_34684 (gVASA) and Golgi/cell cycle associated protein GL50803_17472 (gGCCA). Interacts with actin. Interacts with both monomeric phosphorylated and unphosphorylated actin. The interaction is enhanced by phosphorylation of actin and inhibited by Rho GTPase Rac. In terms of processing, phosphorylated constitutively throughout the life cycle. Phosphorylation is very high in trophozoites and encysting cells of 12 hours. Phosphorylated during excystation. Phosphorylation promotes its binding to various target proteins and is critical for encystation process. Phosphorylation modification is not influenced by polyglycylation modification. Polyglycylated on a glutamate residue, resulting in polyglycine chain on the gamma-carboxyl group. Polyglycylated by the tubulin--tyrosine ligase-like protein GL50803_8456 (gTTLL3). The polyglycine chain is shortened by metallopeptidases of the M20 family, namely dipeptidases GL50803_15832 (gDIP1) and GL50803_8407 (gDIP2). The length of the polyglycine chain is developmental stage-dependent. In trophozoites, glycine residues range from 10 to 31, with the greatest occurrence of 21 residues. In 12 hour encystation stage, glycine residues range from 6 to 22, with the greatest occurrence of 10 residues. The differential rate of polyglycylation/deglycylation during the encystation process regulates the intracellular localization of this protein. Relocalizes partially from the cytoplasm inside the nuclei following the shortening of the polyglycine chain in encysting cells. Polyglycylation modification is not influenced by phosphorylation modification. Polyglycylation prevents oligomerization in vivo.

Its subcellular location is the cytoplasm. It is found in the cytoskeleton. The protein localises to the nucleus. The protein resides in the cell projection. It localises to the cilium. Its subcellular location is the flagellum. It is found in the spindle. The protein localises to the nucleus envelope. The protein resides in the endoplasmic reticulum. Its function is as follows. Adapter protein implicated in the regulation of a large spectrum of both general and specialized signaling pathways. Binds to a large number of partners, usually by recognition of a phosphoserine or phosphothreonine motif. Binding generally results in the modulation of the activity of the binding partner. Binds with varying affinity to various synthetic phosphopeptides having a consensus binding motif RSX(pS/pT)XP, called mode-1, where X is any residue and pS/pT is a phosphorylated serine/threonine, and to synthetic phosphopeptides having a consensus binding motif Xp(S/T)X1-2-COOH, called mode-3, in which the phosphorylated residue occupies the penultimate C-terminal position in the target protein, but does not bind to their unphosphorylated counterparts. Binds to synthetic human RAF1 phosphopeptides, but not to their unphosphorylated forms. Binds to difopein, a polypeptide containing a phosphorylation-independent binding motif. Involved in encystation. Involved in cell proliferation. Required for actin and tubulin cytoskeletal organization. Regulates actin filament formation and nuclear size. This Giardia intestinalis (strain ATCC 50803 / WB clone C6) (Giardia lamblia) protein is 14-3-3 protein.